The chain runs to 131 residues: Large ribosomal subunit protein bL17 (131 aa).

It belongs to the bacterial ribosomal protein bL17 family. As to quaternary structure, part of the 50S ribosomal subunit. Contacts protein L32.

The sequence is that of Large ribosomal subunit protein bL17 from Paraburkholderia phymatum (strain DSM 17167 / CIP 108236 / LMG 21445 / STM815) (Burkholderia phymatum).